Here is a 105-residue protein sequence, read N- to C-terminus: UPF0235 protein RT0827 (105 aa).

It belongs to the UPF0235 family.

The protein is UPF0235 protein RT0827 of Rickettsia typhi (strain ATCC VR-144 / Wilmington).